The sequence spans 209 residues: ATP-dependent Clp protease proteolytic subunit 2 (209 aa).

Catalysis depends on Ser-106, which acts as the Nucleophile. The active site involves His-131.

It belongs to the peptidase S14 family. Fourteen ClpP subunits assemble into 2 heptameric rings which stack back to back to give a disk-like structure with a central cavity, resembling the structure of eukaryotic proteasomes.

It is found in the cytoplasm. It catalyses the reaction Hydrolysis of proteins to small peptides in the presence of ATP and magnesium. alpha-casein is the usual test substrate. In the absence of ATP, only oligopeptides shorter than five residues are hydrolyzed (such as succinyl-Leu-Tyr-|-NHMec, and Leu-Tyr-Leu-|-Tyr-Trp, in which cleavage of the -Tyr-|-Leu- and -Tyr-|-Trp bonds also occurs).. Cleaves peptides in various proteins in a process that requires ATP hydrolysis. Has a chymotrypsin-like activity. Plays a major role in the degradation of misfolded proteins. This Mesorhizobium japonicum (strain LMG 29417 / CECT 9101 / MAFF 303099) (Mesorhizobium loti (strain MAFF 303099)) protein is ATP-dependent Clp protease proteolytic subunit 2.